The chain runs to 90 residues: U7-theraphotoxin-Hhn1h (90 aa).

A signal peptide spans 1–19; sequence MKTAIFTVVLALAVFAVLS. A propeptide spanning residues 20–50 is cleaved from the precursor; sequence FGWEANEKALSEEFTELIHEKEAASETEARE. 3 cysteine pairs are disulfide-bonded: cysteine 51–cysteine 65, cysteine 58–cysteine 70, and cysteine 64–cysteine 81.

The protein belongs to the neurotoxin 10 (Hwtx-1) family. 13 (Hntx-13) subfamily. Expressed by the venom gland.

Its subcellular location is the secreted. In terms of biological role, ion channel inhibitor. The polypeptide is U7-theraphotoxin-Hhn1h (Cyriopagopus hainanus (Chinese bird spider)).